A 120-amino-acid chain; its full sequence is Protein crumbs homolog 3 (120 aa).

The signal sequence occupies residues 1–26 (MANPGLGLLLALGLPFLLARWGRAWG). At 27–59 (QIQTTSANENSTVLPSSTSSSSDGNLRPEAITA) the chain is on the extracellular side. Asparagine 36 is a glycosylation site (N-linked (GlcNAc...) asparagine). A helical transmembrane segment spans residues 60–80 (IIVVFSLLAALLLAVGLALLV). Over 81–120 (RKLREKRQTEGTYRPSSEEQVGARVPPTPNLKLPPEERLI) the chain is Cytoplasmic. An interaction with EPB41L5 region spans residues 84–120 (REKRQTEGTYRPSSEEQVGARVPPTPNLKLPPEERLI). A disordered region spans residues 87–120 (RQTEGTYRPSSEEQVGARVPPTPNLKLPPEERLI). Positions 90-99 (EGTYRPSSEE) are enriched in polar residues. The PDZ-binding motif lies at 117 to 120 (ERLI).

In terms of assembly, component of a complex composed of CRB3, PALS1 and PATJ. Interacts (via C-terminus) with PALS1 (via PDZ domain). Interacts with PARD6A. Interacts (via intracellular domain) with EPB41L5. Interacts with WDR83. Preferentially expressed in epithelial tissues. Expressed at high levels in lung, kidney, and colon. Expressed at high levels in retina, colon and mammary glands. Moderately expressed in liver, spleen, pancreas and prostate. Moderately to weakly expressed in the placenta. Weakly expressed in skeletal muscle and small intestine.

The protein resides in the apical cell membrane. It localises to the cell junction. Its subcellular location is the tight junction. Its function is as follows. Involved in the establishment of cell polarity in mammalian epithelial cells. Regulates the morphogenesis of tight junctions. Involved in promoting phosphorylation and cytoplasmic retention of transcriptional coactivators YAP1 and WWTR1/TAZ which leads to suppression of TGFB1-dependent transcription of target genes such as CCN2/CTGF, SERPINE1/PAI1, SNAI1/SNAIL1 and SMAD7. This chain is Protein crumbs homolog 3, found in Homo sapiens (Human).